A 152-amino-acid polypeptide reads, in one-letter code: MKISKKRRQELIRKIIHEKKISNQFQIVEELKKYGIKAVQPTVARDLKEIGAVKIMDESGNYVYKLLDETPVIDPWKELKRNFKSFVESIDRAGNLIVIKTIPGTASGIARVIDRLDIDEIVGTLAGDDTIFVAVRDPESCEKIVEKLSSIL.

The protein belongs to the ArgR family.

The protein resides in the cytoplasm. It functions in the pathway amino-acid biosynthesis; L-arginine biosynthesis [regulation]. In terms of biological role, regulates arginine biosynthesis genes. This is Arginine repressor from Thermotoga sp. (strain RQ2).